Reading from the N-terminus, the 177-residue chain is Peptide methionine sulfoxide reductase MsrA 2 (177 aa).

Residue Cys12 is part of the active site.

It belongs to the MsrA Met sulfoxide reductase family.

The catalysed reaction is L-methionyl-[protein] + [thioredoxin]-disulfide + H2O = L-methionyl-(S)-S-oxide-[protein] + [thioredoxin]-dithiol. It catalyses the reaction [thioredoxin]-disulfide + L-methionine + H2O = L-methionine (S)-S-oxide + [thioredoxin]-dithiol. In terms of biological role, has an important function as a repair enzyme for proteins that have been inactivated by oxidation. Catalyzes the reversible oxidation-reduction of methionine sulfoxide in proteins to methionine. This is Peptide methionine sulfoxide reductase MsrA 2 (msrA2) from Staphylococcus aureus (strain Mu50 / ATCC 700699).